The following is a 337-amino-acid chain: uncharacterized protein (337 aa).

The Cytoplasmic portion of the chain corresponds to 1 to 10 (MKLKINIRPN). The helical transmembrane segment at 11-31 (EIIFLICIVVIFSFSYTLTYF) threads the bilayer. The Extracellular segment spans residues 32 to 100 (DSPIFKEHYI…LEKLFSFSDN (69 aa)). The helical transmembrane segment at 101–121 (ILIVLIIVQVIVGFLIFLLSV) threads the bilayer. The Cytoplasmic portion of the chain corresponds to 122–197 (EKLSKCNYQL…KILIIKKKRD (76 aa)). Over residues 148–167 (NNNNEDINNNNNNNNNNNNK) the composition is skewed to low complexity. Residues 148-179 (NNNNEDINNNNNNNNNNNNKNKNDERNNEEIE) are disordered. The helical transmembrane segment at 198–218 (ILLAIIIFFLVLLGVLTIIYV) threads the bilayer. At 219–285 (SFIPLNIRKA…SWSLDSGLFN (67 aa)) the chain is on the extracellular side. A helical transmembrane segment spans residues 286-306 (VKIVFFSTILIEFLTGCLILL). The Cytoplasmic segment spans residues 307–337 (MKFKKDPNIVPLTKPSIASPTQIPHLFCIAK).

The protein localises to the membrane. This is an uncharacterized protein from Dictyostelium discoideum (Social amoeba).